Reading from the N-terminus, the 432-residue chain is Lipid-A-disaccharide synthase (432 aa).

Polar residues predominate over residues 1 to 11 (MTGIGNQTSGI). The disordered stretch occupies residues 1–35 (MTGIGNQTSGIETGVHDRAPADGEPTALPISHSPL).

Belongs to the LpxB family.

The catalysed reaction is a lipid X + a UDP-2-N,3-O-bis[(3R)-3-hydroxyacyl]-alpha-D-glucosamine = a lipid A disaccharide + UDP + H(+). Its pathway is bacterial outer membrane biogenesis; LPS lipid A biosynthesis. Its function is as follows. Condensation of UDP-2,3-diacylglucosamine and 2,3-diacylglucosamine-1-phosphate to form lipid A disaccharide, a precursor of lipid A, a phosphorylated glycolipid that anchors the lipopolysaccharide to the outer membrane of the cell. In Xanthomonas oryzae pv. oryzae (strain MAFF 311018), this protein is Lipid-A-disaccharide synthase.